A 704-amino-acid polypeptide reads, in one-letter code: Structure-specific endonuclease subunit SLX1 homolog (704 aa).

The GIY-YIG domain occupies 4–90; the sequence is RFHCVYLLTS…TASARLRHTI (87 aa). 3 disordered regions span residues 157–180, 290–323, and 354–378; these read ESPR…ADGV, ASFA…RVRT, and GAAL…SRPP. Composition is skewed to polar residues over residues 161–175 and 311–320; these read VGTQ…SLQG and AGSSTPSPQR. Residues 446–526 form an SLX1-type zinc finger; the sequence is CSLCALPLQP…PSQPCPCPLC (81 aa). Disordered regions lie at residues 601-629 and 650-671; these read VPGA…SSPI and ASLA…GHSN. Positions 650–662 are enriched in low complexity; that stretch reads ASLAALSPTSASP.

It belongs to the SLX1 family. As to quaternary structure, forms a heterodimer with a member of the SLX4 family. Requires a divalent metal cation as cofactor.

Its subcellular location is the nucleus. In terms of biological role, catalytic subunit of a heterodimeric structure-specific endonuclease that resolves DNA secondary structures generated during DNA repair and recombination. Has endonuclease activity towards branched DNA substrates, introducing single-strand cuts in duplex DNA close to junctions with ss-DNA. The protein is Structure-specific endonuclease subunit SLX1 homolog of Leishmania major.